We begin with the raw amino-acid sequence, 251 residues long: Protein FAM216A (251 aa).

Residues 1 to 16 are compositionally biased toward polar residues; that stretch reads MPNQGPVSDWTECSSS. Residues 1 to 49 form a disordered region; the sequence is MPNQGPVSDWTECSSSAEPPAVARAEGGGGGSAGHSYYQNSKDRIKDGH.

Belongs to the FAM216 family.

This chain is Protein FAM216A (FAM216A), found in Bos taurus (Bovine).